We begin with the raw amino-acid sequence, 125 residues long: Ribosome-binding factor A (125 aa).

Belongs to the RbfA family. Monomer. Binds 30S ribosomal subunits, but not 50S ribosomal subunits or 70S ribosomes.

The protein resides in the cytoplasm. Its function is as follows. One of several proteins that assist in the late maturation steps of the functional core of the 30S ribosomal subunit. Associates with free 30S ribosomal subunits (but not with 30S subunits that are part of 70S ribosomes or polysomes). Required for efficient processing of 16S rRNA. May interact with the 5'-terminal helix region of 16S rRNA. The polypeptide is Ribosome-binding factor A (Chloroherpeton thalassium (strain ATCC 35110 / GB-78)).